The following is a 483-amino-acid chain: 6-phosphogluconate dehydrogenase, decarboxylating (483 aa).

Residues 10-15 and 33-35 each bind NADP(+); these read GLAVMG and NRT. Lysine 38 is modified (N6-acetyllysine). Serine 57 carries the phosphoserine modification. Residues 75–77 and asparagine 103 contribute to the NADP(+) site; that span reads VKA. The substrate site is built by asparagine 103, serine 129, and glycine 131. Serine 129 carries the post-translational modification Phosphoserine. The active-site Proton acceptor is lysine 184. Residue 187–188 coordinates substrate; the sequence is HN. Glutamate 191 (proton donor) is an active-site residue. Residues tyrosine 192, lysine 261, arginine 288, arginine 447, and histidine 453 each coordinate substrate. 478–481 is a binding site for NADP(+); sequence SSSY.

The protein belongs to the 6-phosphogluconate dehydrogenase family. As to quaternary structure, homodimer.

It localises to the cytoplasm. It catalyses the reaction 6-phospho-D-gluconate + NADP(+) = D-ribulose 5-phosphate + CO2 + NADPH. It functions in the pathway carbohydrate degradation; pentose phosphate pathway; D-ribulose 5-phosphate from D-glucose 6-phosphate (oxidative stage): step 3/3. Functionally, catalyzes the oxidative decarboxylation of 6-phosphogluconate to ribulose 5-phosphate and CO(2), with concomitant reduction of NADP to NADPH. This is 6-phosphogluconate dehydrogenase, decarboxylating (PGD) from Ovis aries (Sheep).